Reading from the N-terminus, the 229-residue chain is Triosephosphate isomerase (229 aa).

Substrate is bound at residue 9–11; that stretch reads NLK. His93 serves as the catalytic Electrophile. Glu141 serves as the catalytic Proton acceptor. Residues Ile146, Gly181, and 202–203 contribute to the substrate site; that span reads AS.

This sequence belongs to the triosephosphate isomerase family. Homotetramer; dimer of dimers.

The protein localises to the cytoplasm. The catalysed reaction is D-glyceraldehyde 3-phosphate = dihydroxyacetone phosphate. Its pathway is carbohydrate biosynthesis; gluconeogenesis. The protein operates within carbohydrate degradation; glycolysis; D-glyceraldehyde 3-phosphate from glycerone phosphate: step 1/1. In terms of biological role, involved in the gluconeogenesis. Catalyzes stereospecifically the conversion of dihydroxyacetone phosphate (DHAP) to D-glyceraldehyde-3-phosphate (G3P). The sequence is that of Triosephosphate isomerase from Pyrobaculum islandicum (strain DSM 4184 / JCM 9189 / GEO3).